The following is a 270-amino-acid chain: Indole-3-glycerol phosphate synthase (270 aa).

This sequence belongs to the TrpC family.

The enzyme catalyses 1-(2-carboxyphenylamino)-1-deoxy-D-ribulose 5-phosphate + H(+) = (1S,2R)-1-C-(indol-3-yl)glycerol 3-phosphate + CO2 + H2O. It functions in the pathway amino-acid biosynthesis; L-tryptophan biosynthesis; L-tryptophan from chorismate: step 4/5. The chain is Indole-3-glycerol phosphate synthase from Beutenbergia cavernae (strain ATCC BAA-8 / DSM 12333 / CCUG 43141 / JCM 11478 / NBRC 16432 / NCIMB 13614 / HKI 0122).